The chain runs to 380 residues: Chaperone protein DnaJ (380 aa).

The region spanning 5 to 70 (DYYEVLGVER…SKRAAYDQYG (66 aa)) is the J domain. A CR-type zinc finger spans residues 139-217 (GTNVNIRVPT…CHGEGRVEES (79 aa)). Cysteine 152, cysteine 155, cysteine 169, cysteine 172, cysteine 191, cysteine 194, cysteine 205, and cysteine 208 together coordinate Zn(2+). CXXCXGXG motif repeat units follow at residues 152–159 (CKPCDGSG), 169–176 (CPTCGGIG), 191–198 (CPRCHGHG), and 205–212 (CDSCHGEG). The segment at 224–245 (VPPGVDTGDRIRLSGEGEAGTQ) is disordered.

This sequence belongs to the DnaJ family. Homodimer. Zn(2+) is required as a cofactor.

It is found in the cytoplasm. In terms of biological role, participates actively in the response to hyperosmotic and heat shock by preventing the aggregation of stress-denatured proteins and by disaggregating proteins, also in an autonomous, DnaK-independent fashion. Unfolded proteins bind initially to DnaJ; upon interaction with the DnaJ-bound protein, DnaK hydrolyzes its bound ATP, resulting in the formation of a stable complex. GrpE releases ADP from DnaK; ATP binding to DnaK triggers the release of the substrate protein, thus completing the reaction cycle. Several rounds of ATP-dependent interactions between DnaJ, DnaK and GrpE are required for fully efficient folding. Also involved, together with DnaK and GrpE, in the DNA replication of plasmids through activation of initiation proteins. This is Chaperone protein DnaJ from Pseudomonas syringae pv. syringae (strain B728a).